Here is a 264-residue protein sequence, read N- to C-terminus: 3-methyl-2-oxobutanoate hydroxymethyltransferase 1 (264 aa).

Mg(2+) is bound by residues D45 and D84. Residues 45–46, D84, and K112 contribute to the 3-methyl-2-oxobutanoate site; that span reads DS. Residue E114 participates in Mg(2+) binding. Residue E181 is the Proton acceptor of the active site.

Belongs to the PanB family. Homodecamer; pentamer of dimers. Requires Mg(2+) as cofactor.

The protein localises to the cytoplasm. The catalysed reaction is 3-methyl-2-oxobutanoate + (6R)-5,10-methylene-5,6,7,8-tetrahydrofolate + H2O = 2-dehydropantoate + (6S)-5,6,7,8-tetrahydrofolate. The protein operates within cofactor biosynthesis; (R)-pantothenate biosynthesis; (R)-pantoate from 3-methyl-2-oxobutanoate: step 1/2. Catalyzes the reversible reaction in which hydroxymethyl group from 5,10-methylenetetrahydrofolate is transferred onto alpha-ketoisovalerate to form ketopantoate. This is 3-methyl-2-oxobutanoate hydroxymethyltransferase 1 from Aliivibrio fischeri (strain ATCC 700601 / ES114) (Vibrio fischeri).